Reading from the N-terminus, the 182-residue chain is Adenine phosphoribosyltransferase (182 aa).

The protein belongs to the purine/pyrimidine phosphoribosyltransferase family. As to quaternary structure, homodimer.

The protein resides in the cytoplasm. It catalyses the reaction AMP + diphosphate = 5-phospho-alpha-D-ribose 1-diphosphate + adenine. Its pathway is purine metabolism; AMP biosynthesis via salvage pathway; AMP from adenine: step 1/1. Its function is as follows. Catalyzes a salvage reaction resulting in the formation of AMP, that is energically less costly than de novo synthesis. In Pseudomonas entomophila (strain L48), this protein is Adenine phosphoribosyltransferase.